The chain runs to 60 residues: UPF0337 protein SACOL1680 (60 aa).

It belongs to the UPF0337 (CsbD) family.

This Staphylococcus aureus (strain COL) protein is UPF0337 protein SACOL1680.